The primary structure comprises 202 residues: MKQILLIDVSPRGKDSASRSVADTLAARLTSLYPSAKLIRRDLAAQPLPHLDEITLRALSTRDAAEAERLKETARQSDQLTDELLESDLLVIATPMWNFGIPSVLKAWIDLVVRPGRTFQYADGEVLGLAKDKKAILVLASGGVFTEGPWRPWDFIEPYLRQILNFIGIVDVQTVRIEGMNIPELVVDAVPKANKAVAELVL.

FMN-binding positions include serine 10, 16–18 (SAS), and 96–99 (MWNF).

It belongs to the azoreductase type 1 family. As to quaternary structure, homodimer. It depends on FMN as a cofactor.

It catalyses the reaction 2 a quinone + NADH + H(+) = 2 a 1,4-benzosemiquinone + NAD(+). The enzyme catalyses N,N-dimethyl-1,4-phenylenediamine + anthranilate + 2 NAD(+) = 2-(4-dimethylaminophenyl)diazenylbenzoate + 2 NADH + 2 H(+). In terms of biological role, quinone reductase that provides resistance to thiol-specific stress caused by electrophilic quinones. Also exhibits azoreductase activity. Catalyzes the reductive cleavage of the azo bond in aromatic azo compounds to the corresponding amines. This chain is FMN-dependent NADH:quinone oxidoreductase, found in Beijerinckia indica subsp. indica (strain ATCC 9039 / DSM 1715 / NCIMB 8712).